The primary structure comprises 561 residues: Acyl-CoA ligase frbB (561 aa).

ATP contacts are provided by residues 213-221 (TSGTSGAQK), 354-359 (PGWGLT), Asp437, Arg456, and Lys551. The interval 284–354 (DLKRVLGSIA…TLRPKWHLQP (71 aa)) is SBD1. The segment at 355-417 (GWGLTEGGGA…MKSPSVIAGY (63 aa)) is SBD2.

This sequence belongs to the ATP-dependent AMP-binding enzyme family.

It functions in the pathway antifungal biosynthesis. Functionally, acyl-CoA ligase; part of the gene cluster that mediates the biosynthesis of the antifungal antibiotic FR901469, an inhibitor of beta-1,3-glucansynthase, exerting antifungal activity against the pathogenes Candida albicans and Aspergillus fumigatus. FR901469 is a cyclic depsipeptide containing 12 amino acid residues and a fatty acid chain. The NRPS frbI contains 12 modules responsible for the formation of the depsipeptide backbone which is denoted as Acyl-Thr-Ala-Tyr-Val-4OHPro-Thr-Thr-3OHPro-threo3OHGln-Gly-Thr-Orn-OH (C71H116N14O23). The PKS frbB is probably involved in the production of the hydrocarbon chain, and the acyl-CoA ligase frbC might be involved in the transport of the chain to the peptide ptoduct of frbI. Because FR901469 contains 3 hydroxylated amino acid residues, the 3 oxygenases frbA, frbH, and frbJ might be participating in amino acid hydroxylation. As no thioesterase domains were detected in frbI or frbB, the thioesterases frbD and frbE may instead release and cyclize the products of the NRPS and PKS, respectively. The sequence is that of Acyl-CoA ligase frbB from Dothideomycetidae sp. (strain 11243) (Fungal sp. (strain No.11243)).